The chain runs to 772 residues: Endoplasmic reticulum membrane sensor NFE2L1 (772 aa).

Residues 7–24 (YLTEGLLQFTILLSLIGV) traverse the membrane as a helical; Signal-anchor for type II membrane protein segment. The disordered stretch occupies residues 108 to 148 (DPEGSVSGSQPNSGLALESSSGLQDVTGPDNGVRESETEQG). Positions 113–131 (VSGSQPNSGLALESSSGLQ) are enriched in polar residues. The segment at 191–199 (VFDYSHRQK) is cholesterol recognition/amino acid consensus (CRAC) region. Asn348 and Asn360 each carry an N-linked (GlcNAc...) asparagine glycan. The segment at 379–383 (SPEVE) is CPD. 2 N-linked (GlcNAc...) asparagine glycosylation sites follow: Asn412 and Asn423. Disordered stretches follow at residues 470–532 (EEEF…DSET) and 582–613 (SALDSADLPPPSALKKGSKEKQADFLDKQMSR). Residues 476-480 (DSGLS) carry the Destruction motif motif. Positions 476–523 (DSGLSLDSSHSPSSLSSSEGSSSSSSSSSSSSSSASSSASSSFSEEGA) are enriched in low complexity. A Phosphoserine; by CK2 modification is found at Ser528. The span at 598 to 613 (GSKEKQADFLDKQMSR) shows a compositional bias: basic and acidic residues. A Phosphoserine; by PKA modification is found at Ser599. In terms of domain architecture, bZIP spans 654–717 (LIRDIRRRGK…RQMKQKVQSL (64 aa)). Residues 656-675 (RDIRRRGKNKMAAQNCRKRK) form a basic motif region. The segment at 682 to 696 (LERDVEDLQRDKARL) is leucine-zipper.

This sequence belongs to the bZIP family. CNC subfamily. Interacts with KEAP1. In terms of assembly, interacts (via CPD region) with FBXW7; leading to its ubiquitination and degradation. Interacts with SYVN1/HRD1; leading to its ubiquitination and degradation. Interacts (when ubiquitinated) with DDI2; leading to its cleavage. As to quaternary structure, interacts (via the bZIP domain) with small MAF protein (MAFF, MAFG or MAFK); required for binding to antioxidant response elements (AREs) on DNA. Interacts (via Destruction motif) with BTRC; leading to its ubiquitination and degradation. Interacts with CEBPB; the heterodimer represses expression of DSPP during odontoblast differentiation. Interacts with MOTS-c, a peptide produced by the mitochondrially encoded 12S rRNA MT-RNR1. Cleaved at Leu-104 by the aspartyl protease DDI2 following retrotranslocation, releasing the protein from the endoplasmic reticulum membrane and forming the transcription factor NRF1 that translocates into the nucleus. Ubiquitination is prerequisite for cleavage by aspartyl protease DDI2. Post-translationally, N-glycosylated in normal conditions, when it has a single-pass type II membrane protein topology, with the DNA-binding domain facing the endoplasmic reticulum lumen. Deglycosylated during retrotranslocation to the cytosolic side of the membrane, to have a single-pass type III membrane protein topology with the major part of the protein facing the cytosol. In terms of processing, ubiquitinated by the SCF(FBXW7) complex and SYVN1/HRD1, leading to its degradation by the proteasome. Ubiquitinated during retrotranslocation to the cytosolic side of the membrane: ubiquitination does not lead to degradation and is required for processing by the aspartyl protease DDI2 and subsequent release from the endoplasmic reticulum membrane. Phosphorylation by CK2 at Ser-528 inhibits transcription factor activity, possibly by affecting DNA-binding activity. Phosphorylation at Ser-599 is required for interaction with CEBPB. Post-translationally, ubiquitinated by the SCF(BTRC) complex in the nucleus, leading to its degradation by the proteasome.

The protein resides in the endoplasmic reticulum membrane. Its subcellular location is the nucleus. Functionally, endoplasmic reticulum membrane sensor that translocates into the nucleus in response to various stresses to act as a transcription factor. Constitutes a precursor of the transcription factor NRF1. Able to detect various cellular stresses, such as cholesterol excess, oxidative stress or proteasome inhibition. In response to stress, it is released from the endoplasmic reticulum membrane following cleavage by the protease DDI2 and translocates into the nucleus to form the transcription factor NRF1. Acts as a key sensor of cholesterol excess: in excess cholesterol conditions, the endoplasmic reticulum membrane form of the protein directly binds cholesterol via its CRAC motif, preventing cleavage and release of the transcription factor NRF1, thereby allowing expression of genes promoting cholesterol removal, such as CD36. Involved in proteasome homeostasis: in response to proteasome inhibition, it is released from the endoplasmic reticulum membrane, translocates to the nucleus and activates expression of genes encoding proteasome subunits. In terms of biological role, CNC-type bZIP family transcription factor that translocates to the nucleus and regulates expression of target genes in response to various stresses. Heterodimerizes with small-Maf proteins (MAFF, MAFG or MAFK) and binds DNA motifs including the antioxidant response elements (AREs), which regulate expression of genes involved in oxidative stress response. Activates or represses expression of target genes, depending on the context. Plays a key role in cholesterol homeostasis by acting as a sensor of cholesterol excess: in low cholesterol conditions, translocates into the nucleus and represses expression of genes involved in defense against cholesterol excess, such as CD36. In excess cholesterol conditions, the endoplasmic reticulum membrane form of the protein directly binds cholesterol via its CRAC motif, preventing cleavage and release of the transcription factor NRF1, thereby allowing expression of genes promoting cholesterol removal. Critical for redox balance in response to oxidative stress: acts by binding the AREs motifs on promoters and mediating activation of oxidative stress response genes, such as GCLC, GCLM, GSS, MT1 and MT2. Plays an essential role during fetal liver hematopoiesis: probably has a protective function against oxidative stress and is involved in lipid homeostasis in the liver. Involved in proteasome homeostasis: in response to proteasome inhibition, mediates the 'bounce-back' of proteasome subunits by translocating into the nucleus and activating expression of genes encoding proteasome subunits. Also involved in regulating glucose flux. Together with CEBPB; represses expression of DSPP during odontoblast differentiation. In response to ascorbic acid induction, activates expression of SP7/Osterix in osteoblasts. The chain is Endoplasmic reticulum membrane sensor NFE2L1 (NFE2L1) from Homo sapiens (Human).